A 743-amino-acid polypeptide reads, in one-letter code: MSRRSRGDDLEDLQYQDTDSDVPEPKENRVKVKWTPEEDETLKALVKKHGQGEWKTIASNLNNRTEQQCQHRWLRVLHPDLVKGPWTKEEDEKVIELVKKYGTKHWTLIAKQLRGRMGKQCRERWHNHLNPEVKKSSWTEEEDRIICQAHKVLGNRWAEIAKLLPGRTDNAVKNHWNSTIKRKVETGGFLTVKASGQQEEREDSGYQAAEDQNHVLLSEPVERSANIPEEPSNILSPKLLTKSPGIRSEQESGGEGSNSESATAIVDSAPEKWMVEYVNFLVPGSDIMESDPEAWCELSSFDLGEDSTVSDVGSPTHAAVTDKPQASNVTEYRLDGHTLSDLCKGNKGELIPISPQPQTAFGTPPSVLKQHKKRKITLSPVTENGGSITTSVTEANSMTPKSTPVKSLPFSPSQFLNFWSKQDALELENPSLTSTPVCSQKTMVTTPLHRDKTPLLQKNSVFITPNNKFAADHVLHTPTPFKNALEKFGSLKPLPPTPHLEEDLKEVLRSESGIELIIVDEPKLERQKRKPHSPMKKVRKSLALDIIDKHPKPSSLTLPSAVSAHMQPQTCDSFLSVSLNESSCSREENSVLNQGFVQVKTSKGAVVQLGNTSQLLTDIGELVKTQCSLRNTETATPFKTENGTFTNTDLCPQSLMDLDTFHSTAVASNKCPTIKTETLFQVKPEKTKMQRHNIMNIPEPMTAAWKTVAFGGSQDQMLMQEKARAILNLTYKHSSTSRALVLS.

The interval 1 to 29 (MSRRSRGDDLEDLQYQDTDSDVPEPKENR) is disordered. Acidic residues predominate over residues 9–22 (DLEDLQYQDTDSDV). 3 consecutive HTH myb-type domains span residues 26 to 77 (KENR…LRVL), 78 to 133 (HPDL…NPEV), and 134 to 184 (KKSS…KRKV). 3 consecutive DNA-binding regions (H-T-H motif) follow at residues 54 to 77 (WKTI…LRVL), 106 to 129 (WTLI…HNHL), and 157 to 180 (WAEI…NSTI). Disordered stretches follow at residues 221 to 262 (VERS…SESA) and 381 to 406 (VTEN…TPVK).

As to quaternary structure, component of the DREAM complex.

The protein resides in the nucleus. In Xenopus laevis (African clawed frog), this protein is Myb-related protein B (mybl2).